An 88-amino-acid polypeptide reads, in one-letter code: MLCAIYKSKKKLGSYLYVANREDFSSVPSVLLEHFGKPELVMMFNLLGRKALHNVDCNEVLETIKRQGFYLQIAKQDDGLFNSLSEIK.

The 85-residue stretch at methionine 1–serine 85 folds into the YcgL domain.

In Haemophilus influenzae (strain ATCC 51907 / DSM 11121 / KW20 / Rd), this protein is YcgL domain-containing protein HI_1446.